We begin with the raw amino-acid sequence, 436 residues long: Gamma-glutamyl phosphate reductase (436 aa).

The protein belongs to the gamma-glutamyl phosphate reductase family.

The protein localises to the cytoplasm. The catalysed reaction is L-glutamate 5-semialdehyde + phosphate + NADP(+) = L-glutamyl 5-phosphate + NADPH + H(+). It participates in amino-acid biosynthesis; L-proline biosynthesis; L-glutamate 5-semialdehyde from L-glutamate: step 2/2. Its function is as follows. Catalyzes the NADPH-dependent reduction of L-glutamate 5-phosphate into L-glutamate 5-semialdehyde and phosphate. The product spontaneously undergoes cyclization to form 1-pyrroline-5-carboxylate. The polypeptide is Gamma-glutamyl phosphate reductase (Prochlorococcus marinus (strain AS9601)).